The primary structure comprises 145 residues: Large ribosomal subunit protein uL13 (145 aa).

The protein belongs to the universal ribosomal protein uL13 family. In terms of assembly, part of the 50S ribosomal subunit.

Its function is as follows. This protein is one of the early assembly proteins of the 50S ribosomal subunit, although it is not seen to bind rRNA by itself. It is important during the early stages of 50S assembly. This chain is Large ribosomal subunit protein uL13, found in Staphylococcus carnosus (strain TM300).